The chain runs to 1139 residues: MDESSELGGLETMDTLTELGDELTLGDIDEMLQFVSNQVGEFPDLFSEQLCSSFPGGGSSGSSSSSNSSSSSGSNSRGNGGAATDPGVQRSFSQVPLPTFSPSTASPQALALQVKVSPTPPRATPVLQPRPQPQPQPQPSAQLQQQTVMITPTFSTAPQTRIIQQPLIYQNAATSFQVLQAQVQSLVTSSQVQPVTIQQQVQTVQAQRVLTQTANGTLQTLAPATVQTVAAPQVQQVPVLVQPQIIKTDSLVLTTLKTDGSPVMAAVQNPALTALTTPLQTGALQVPTLVGSNGTILTTMPVMMGQEKVPIKQVPGGVKQLEPPKEGERRTTHNIIEKRYRSSINDKIIELKDLVMGTDAKMHKSGVLRKAIDYIKYLQQVNHKLRQENMVLKLANQKNKLLKGIDLGSLVDSDVDLKIEDFNQNVLLMSPPASDSGSQAGFSPYSIDSEPGSPLLDDAKVKDEPDSPPVALGMVDRSRILLCVLTFLGLSFSPLTSLLQWGGAHDTDQHPYSGSGRSVLSLESGSGGWFDWMMPTLLLWLVNGVIVLSVFVKLLVHGEPVIRPHTRSSVTFWRHRKQADLDLARGDFAAAAANLQTCLSVLGRALPTSRLDLACSLSWNVIRYSLQKLRLVRWILKKVFQRWRATPATAAGFEDEAKSSARDAALAYHRLHQLHITGKLPAGSTCSDVHMALCAVNLAECAEEKIPPSTLIEIHLTAAMGLKTGCGGKLGFLASYFLNRAQSLCGPEHSTVPDSLRWLCHPLGQKFFMERSWSIKSAAKESLYCAQRNPADPIAQVHQAFCKNLLERAVESLVKPQSKKKSGDQEDESCEFSSALEYLRLLHSFVDSVGFVTPPFSSSSVLKSALGPDIICRWWTSAVTMAISWLQGDDAAVRSHFTEVERIPKALEVTESPLVKAVFYACRAMHASLSGKGDGQQNSFCHCERASGHLWNSLNVSGATSDPSLNHVVQLLTCDLLLSLRTALWQKQAGASQGLGETYHASGTELAGFQRDLGSLRRLAHSFRPAYRKVFLHEPTVRLMAGANPTRTHQLLEHSLRRRTSQNTKHGEIDTWPGQRERATAILLACRHLPLSFLSSPGQRAVLLAEAARTLEKVGDRRSCNDCQQMIVKLGGGTAIAAS.

The segment at 1-50 (MDESSELGGLETMDTLTELGDELTLGDIDEMLQFVSNQVGEFPDLFSEQL) is transcriptional activation (acidic). Over 1–479 (MDESSELGGL…VALGMVDRSR (479 aa)) the chain is Cytoplasmic. Disordered stretches follow at residues 48-104 (EQLC…SPST) and 119-143 (TPPR…SAQL). The segment covering 61-77 (GSSSSSNSSSSSGSNSR) has biased composition (low complexity). Residues 90 to 104 (RSFSQVPLPTFSPST) show a composition bias toward polar residues. Residues 119–138 (TPPRATPVLQPRPQPQPQPQ) are compositionally biased toward pro residues. An interaction with LMNA region spans residues 235–489 (QQVPVLVQPQ…ILLCVLTFLG (255 aa)). The bHLH domain maps to 328-378 (ERRTTHNIIEKRYRSSINDKIIELKDLVMGTDAKMHKSGVLRKAIDYIKYL). The interval 378–399 (LQQVNHKLRQENMVLKLANQKN) is leucine-zipper. Lysine 462 participates in a covalent cross-link: Glycyl lysine isopeptide (Lys-Gly) (interchain with G-Cter in SUMO2). The helical transmembrane segment at 480–500 (ILLCVLTFLGLSFSPLTSLLQ) threads the bilayer. At 501 to 531 (WGGAHDTDQHPYSGSGRSVLSLESGSGGWFD) the chain is on the lumenal side. A helical membrane pass occupies residues 532–552 (WMMPTLLLWLVNGVIVLSVFV). Residues 553-1139 (KLLVHGEPVI…LGGGTAIAAS (587 aa)) are Cytoplasmic-facing. At serine 1096 the chain carries Phosphoserine.

The protein belongs to the SREBP family. Homodimer; efficient DNA binding of the soluble transcription factor fragment requires dimerization with another bHLH protein. Interacts with LMNA. As to quaternary structure, forms a tight complex with SCAP, the SCAP-SREBP complex, in the endoplasmic reticulum membrane and the Golgi apparatus. Interacts with PAQR3; the interaction anchors the SCAP-SREBP complex to the Golgi apparatus in low cholesterol conditions. Interacts (via C-terminal domain) with RNF139. In terms of processing, processed in the Golgi apparatus, releasing the protein from the membrane. At low cholesterol the SCAP-SREBP complex is recruited into COPII vesicles for export from the endoplasmic reticulum. In the Golgi, complex SREBPs are cleaved sequentially by site-1 (MBTPS1, S1P) and site-2 (MBTPS2, S2P) proteases. The first cleavage by site-1 protease occurs within the luminal loop, the second cleavage by site-2 protease occurs within the first transmembrane domain, releasing the transcription factor from the Golgi membrane. Apoptosis triggers cleavage by the cysteine proteases caspase-3 and caspase-7. Cleavage and activation is induced by mediated cholesterol efflux. Post-translationally, phosphorylated by AMPK, leading to suppress protein processing and nuclear translocation, and repress target gene expression. SCAP-free SREBF2 is ubiquitinated by the BCR(ARMC5) complex, leading to its degradation. In terms of processing, ubiquitinated; the nuclear form has a rapid turnover and is rapidly ubiquitinated and degraded by the proteasome in the nucleus.

Its subcellular location is the endoplasmic reticulum membrane. The protein localises to the golgi apparatus membrane. It localises to the cytoplasmic vesicle. The protein resides in the COPII-coated vesicle membrane. It is found in the nucleus. With respect to regulation, activation by cleavage is down-regulated upon activation of SIRT3-dependent PRKAA1/AMPK-alpha signaling cascade which leads to inhibition of ATP-consuming lipogenesis to restore cellular energy balance. In terms of biological role, precursor of the transcription factor form (Processed sterol regulatory element-binding protein 2), which is embedded in the endoplasmic reticulum membrane. Low sterol concentrations promote processing of this form, releasing the transcription factor form that translocates into the nucleus and activates transcription of genes involved in cholesterol biosynthesis. Key transcription factor that regulates expression of genes involved in cholesterol biosynthesis. Binds to the sterol regulatory element 1 (SRE-1) (5'-ATCACCCCAC-3'). Has dual sequence specificity binding to both an E-box motif (5'-ATCACGTGA-3') and to SRE-1 (5'-ATCACCCCAC-3'). Regulates transcription of genes related to cholesterol synthesis pathway. The protein is Sterol regulatory element-binding protein 2 (SREBF2) of Cricetulus griseus (Chinese hamster).